The primary structure comprises 319 residues: Transcription initiation factor IIB 6 (319 aa).

Residues 1–16 (MTDARMRSREQERTDE) show a composition bias toward basic and acidic residues. The interval 1-33 (MTDARMRSREQERTDETESESTDGCPECGGLVV) is disordered. The TFIIB-type zinc finger occupies 21–51 (STDGCPECGGLVVNDEEHGESVCADCGLVVE). Residues cysteine 25, cysteine 28, cysteine 43, and cysteine 46 each coordinate Zn(2+). Residues 59 to 74 (PEWRAFDSKEKDEKSR) are compositionally biased toward basic and acidic residues. Residues 59 to 89 (PEWRAFDSKEKDEKSRVGAPTTNTMHDKGLS) form a disordered region. 2 consecutive repeat copies span residues 137–220 (GEID…VREL) and 231–312 (SYVP…ELLE).

Belongs to the TFIIB family.

Functionally, stabilizes TBP binding to an archaeal box-A promoter. Also responsible for recruiting RNA polymerase II to the pre-initiation complex (DNA-TBP-TFIIB). The polypeptide is Transcription initiation factor IIB 6 (Halobacterium salinarum (strain ATCC 700922 / JCM 11081 / NRC-1) (Halobacterium halobium)).